The chain runs to 171 residues: Co-chaperone protein HscB homolog (171 aa).

Residues 2 to 74 (NHFELFGLPS…ISRAEYILAE (73 aa)) form the J domain.

It belongs to the HscB family. In terms of assembly, interacts with HscA and stimulates its ATPase activity.

Co-chaperone involved in the maturation of iron-sulfur cluster-containing proteins. Seems to help targeting proteins to be folded toward HscA. This chain is Co-chaperone protein HscB homolog, found in Vibrio campbellii (strain ATCC BAA-1116).